The sequence spans 40 residues: VVLGPASDGRNAAANNKASDLIRQICCGYGDCGFVPNVCV.

Positions 1-23 (VVLGPASDGRNAAANNKASDLIR) are excised as a propeptide. At Q24 the chain carries Pyrrolidone carboxylic acid. Disulfide bonds link C26–C32 and C27–C39.

It belongs to the conotoxin A superfamily. As to expression, expressed by the venom duct.

It is found in the secreted. Its function is as follows. Alpha-conotoxins act on postsynaptic membranes, they bind to the nicotinic acetylcholine receptors (nAChR) and thus inhibit them. The protein is Alpha-conotoxin-like Lp1.6b of Conus leopardus (Leopard cone).